A 247-amino-acid chain; its full sequence is Cell division protein ZapD (247 aa).

This sequence belongs to the ZapD family. In terms of assembly, interacts with FtsZ.

The protein resides in the cytoplasm. Cell division factor that enhances FtsZ-ring assembly. Directly interacts with FtsZ and promotes bundling of FtsZ protofilaments, with a reduction in FtsZ GTPase activity. The sequence is that of Cell division protein ZapD from Escherichia coli O139:H28 (strain E24377A / ETEC).